The primary structure comprises 542 residues: Quinidine resistance protein 2 (542 aa).

Residues 1–67 lie on the Cytoplasmic side of the membrane; sequence MAGATSSIIR…SFKTVLIAQC (67 aa). Ser-21 bears the Phosphoserine mark. At Thr-38 the chain carries Phosphothreonine. Ser-40 carries the post-translational modification Phosphoserine. Residues 68–88 form a helical membrane-spanning segment; it reads AFTGFFSTIAGAIYYPVLSVI. The Extracellular segment spans residues 89 to 100; the sequence is ERKFDIDEELVN. The chain crosses the membrane as a helical span at residues 101-121; sequence VTVVVYFVFQGLAPTFMGGFA. At 122-127 the chain is on the cytoplasmic side; the sequence is DSLGRR. A helical transmembrane segment spans residues 128 to 148; that stretch reads PVVLVAIVIYFGACIGLACAQ. Position 149 (Thr-149) is a topological domain, extracellular. Residues 150–170 form a helical membrane-spanning segment; sequence YAQIIVLRCLQAAGISPVIAI. Over 171–187 the chain is Cytoplasmic; that stretch reads NSGIMGDVTTRAERGGY. A helical membrane pass occupies residues 188–208; it reads VGYVAGFQVLGSAFGALIGAG. Over 209-216 the chain is Extracellular; it reads LSSRWGWR. The chain crosses the membrane as a helical span at residues 217 to 237; that stretch reads AIFWFLAIGSGICFLASFLIL. Over 238–300 the chain is Cytoplasmic; that stretch reads PETKRNISGN…APFKILKAYE (63 aa). A helical transmembrane segment spans residues 301–321; the sequence is ICILMLVAGLQFAMYTTHLTA. The Extracellular segment spans residues 322 to 333; that stretch reads LSTALSKQYHLT. Residues 334-354 traverse the membrane as a helical segment; that stretch reads VAKVGLCYLPSGICTLCSIVI. Residues 355–413 lie on the Cytoplasmic side of the membrane; that stretch reads AGRYLNWNYRRRLKYYQNWLGKKRSKLLEEHDNDLNLVQRIIENDPKYTFNIFKARLQP. Residues 414 to 434 form a helical membrane-spanning segment; that stretch reads AFVTLLLSSSGFCAYGWCITV. The Extracellular segment spans residues 435–437; the sequence is KAP. The helical transmembrane segment at 438–458 threads the bilayer; the sequence is LAAVLCMSGFASLFSNCILTF. Topologically, residues 459-472 are cytoplasmic; sequence STTLIVDLFPTKTS. A helical membrane pass occupies residues 473-493; it reads TATGCLNLFRCILSAVFIAAL. The Extracellular segment spans residues 494-503; sequence SKMVEKMKFG. The chain crosses the membrane as a helical span at residues 504 to 524; it reads GVFTFLGALTSSSSILLFILL. The Cytoplasmic segment spans residues 525-542; it reads RKGKELAFKRKKQELGVN.

The protein belongs to the major facilitator superfamily. CAR1 family.

Its subcellular location is the cell membrane. Functionally, multidrug resistance transporter involved in resistance and adaptation to quinidine and to the herbicide barban (4-chloro-2-butynyl [3-chlorophenyl] carbamate). Implicated in potassium uptake. The protein is Quinidine resistance protein 2 (QDR2) of Saccharomyces cerevisiae (strain ATCC 204508 / S288c) (Baker's yeast).